The sequence spans 396 residues: Elongation factor Tu (396 aa).

The tr-type G domain maps to 10-206 (KPHVNVGTIG…ALDSYIPTPE (197 aa)). The segment at 19–26 (GHVDHGKT) is G1. 19–26 (GHVDHGKT) lines the GTP pocket. Thr-26 lines the Mg(2+) pocket. Positions 60-64 (GITIN) are G2. The tract at residues 81-84 (DCPG) is G3. GTP-binding positions include 81 to 85 (DCPGH) and 136 to 139 (NKCD). Residues 136–139 (NKCD) form a G4 region. Residues 174–176 (SAL) form a G5 region.

It belongs to the TRAFAC class translation factor GTPase superfamily. Classic translation factor GTPase family. EF-Tu/EF-1A subfamily. As to quaternary structure, monomer.

Its subcellular location is the cytoplasm. It catalyses the reaction GTP + H2O = GDP + phosphate + H(+). Its function is as follows. GTP hydrolase that promotes the GTP-dependent binding of aminoacyl-tRNA to the A-site of ribosomes during protein biosynthesis. In Aromatoleum aromaticum (strain DSM 19018 / LMG 30748 / EbN1) (Azoarcus sp. (strain EbN1)), this protein is Elongation factor Tu.